The chain runs to 309 residues: NmrA-like family domain-containing protein 1 (309 aa).

Residues 11–16 (GATGAQ), 37–41 (RNPEQ), 58–59 (DQ), 79–81 (TNY), lysine 102, lysine 143, and 165–168 (YFEN) each bind NADP(+). Residues 163-199 (PCYFENLLSYFLPQKAADGKSFLLDLPMGDVPMDGMS) form an interaction with ASS1 region.

It belongs to the NmrA-type oxidoreductase family. In terms of assembly, homodimer. Interacts with ASS1. Interaction is enhanced by low NADPH/NADP(+) ratios, which results in inhibition of ASS1 activity.

Its subcellular location is the cytoplasm. It localises to the perinuclear region. It is found in the nucleus. Redox sensor protein. Undergoes restructuring and subcellular redistribution in response to changes in intracellular NADPH/NADP(+) levels. At low NADPH concentrations the protein is found mainly as a monomer, and binds argininosuccinate synthase (ASS1), the enzyme involved in nitric oxide synthesis. Association with ASS1 impairs its activity and reduces the production of nitric oxide, which subsecuently prevents apoptosis. Under normal NADPH concentrations, the protein is found as a dimer and hides the binding site for ASS1. The homodimer binds one molecule of NADPH. Has higher affinity for NADPH than for NADP(+). Binding to NADPH is necessary to form a stable dimer. The chain is NmrA-like family domain-containing protein 1 (Nmral1) from Mus musculus (Mouse).